Consider the following 250-residue polypeptide: Adenosylcobinamide-GDP ribazoletransferase (250 aa).

6 helical membrane passes run 33-53, 63-83, 109-129, 137-157, 180-200, and 203-223; these read IASY…LLYI, IVMT…HIDG, LGTN…LFLT, LTAL…SMMI, FAIA…LAVF, and ILTI…LRIG.

Belongs to the CobS family. Mg(2+) serves as cofactor.

It is found in the cell membrane. The enzyme catalyses alpha-ribazole + adenosylcob(III)inamide-GDP = adenosylcob(III)alamin + GMP + H(+). The catalysed reaction is alpha-ribazole 5'-phosphate + adenosylcob(III)inamide-GDP = adenosylcob(III)alamin 5'-phosphate + GMP + H(+). Its pathway is cofactor biosynthesis; adenosylcobalamin biosynthesis; adenosylcobalamin from cob(II)yrinate a,c-diamide: step 7/7. Joins adenosylcobinamide-GDP and alpha-ribazole to generate adenosylcobalamin (Ado-cobalamin). Also synthesizes adenosylcobalamin 5'-phosphate from adenosylcobinamide-GDP and alpha-ribazole 5'-phosphate. The polypeptide is Adenosylcobinamide-GDP ribazoletransferase (Thermoanaerobacter pseudethanolicus (strain ATCC 33223 / 39E) (Clostridium thermohydrosulfuricum)).